The following is a 199-amino-acid chain: Superoxide dismutase [Fe] (199 aa).

H27, H79, D161, and H165 together coordinate Fe cation.

Belongs to the iron/manganese superoxide dismutase family. As to quaternary structure, homodimer. It depends on Fe cation as a cofactor.

It carries out the reaction 2 superoxide + 2 H(+) = H2O2 + O2. Its function is as follows. Destroys superoxide anion radicals which are normally produced within the cells and which are toxic to biological systems. The sequence is that of Superoxide dismutase [Fe] (sodB) from Synechocystis sp. (strain ATCC 27184 / PCC 6803 / Kazusa).